The chain runs to 144 residues: Maximins 7/H1 (144 aa).

Residues 1 to 18 (MNFKYIVAVSFLIASAYA) form the signal peptide. Positions 19-43 (RSEENDEQSLSQRDVLEEESLREIR) are excised as a propeptide. Asparagine 70 bears the Asparagine amide mark. Positions 74-123 (TAEDHEVMKRLEAVMRDLDSLDYPEEAAERETRGFNQEEIANLFTKKEKR) are excised as a propeptide. Position 143 is a leucine amide (leucine 143).

The protein belongs to the bombinin family. As to expression, expressed by the skin glands.

Its subcellular location is the secreted. Maximin-7 shows antimicrobial activity against bacteria and against the fungus C.albicans. It has little hemolytic activity. Functionally, maximin-H1 shows antibacterial activity against both Gram-positive and Gram-negative bacteria. It also shows antimicrobial activity against the fungus C.albicans. Shows strong hemolytic activity. The protein is Maximins 7/H1 of Bombina maxima (Giant fire-bellied toad).